Here is a 165-residue protein sequence, read N- to C-terminus: Type VI lipase immunity protein Tli3 (165 aa).

Positions 1–21 (MKCKTLLIACLFGLGSAQALA) are cleaved as a signal peptide.

In terms of assembly, interacts with the Tle3 toxin.

It is found in the periplasm. Its function is as follows. Immunity protein that neutralizes the toxicity of the P.aeruginosa antibacterial toxin Tle3 in the periplasm to protect the cell from fratricide intoxication. The protein is Type VI lipase immunity protein Tli3 of Pseudomonas aeruginosa (strain ATCC 15692 / DSM 22644 / CIP 104116 / JCM 14847 / LMG 12228 / 1C / PRS 101 / PAO1).